The chain runs to 471 residues: Cysteine--tRNA ligase (471 aa).

A Zn(2+)-binding site is contributed by C29. The 'HIGH' region signature appears at 31–41 (PTVYNYIHIGN). Zn(2+) contacts are provided by C209, H234, and E238. Residues 266–270 (KMSKS) carry the 'KMSKS' region motif. Residue K269 coordinates ATP.

Belongs to the class-I aminoacyl-tRNA synthetase family. As to quaternary structure, monomer. Zn(2+) is required as a cofactor.

It localises to the cytoplasm. It catalyses the reaction tRNA(Cys) + L-cysteine + ATP = L-cysteinyl-tRNA(Cys) + AMP + diphosphate. This is Cysteine--tRNA ligase from Listeria monocytogenes serovar 1/2a (strain ATCC BAA-679 / EGD-e).